Here is a 279-residue protein sequence, read N- to C-terminus: Tryptophan synthase alpha chain (279 aa).

Active-site proton acceptor residues include Glu50 and Asp61.

It belongs to the TrpA family. As to quaternary structure, tetramer of two alpha and two beta chains.

It carries out the reaction (1S,2R)-1-C-(indol-3-yl)glycerol 3-phosphate + L-serine = D-glyceraldehyde 3-phosphate + L-tryptophan + H2O. It participates in amino-acid biosynthesis; L-tryptophan biosynthesis; L-tryptophan from chorismate: step 5/5. Its function is as follows. The alpha subunit is responsible for the aldol cleavage of indoleglycerol phosphate to indole and glyceraldehyde 3-phosphate. The sequence is that of Tryptophan synthase alpha chain from Brucella ovis (strain ATCC 25840 / 63/290 / NCTC 10512).